A 601-amino-acid chain; its full sequence is Tubulin polyglutamylase ttll-4 (601 aa).

The segment covering 1–18 has biased composition (polar residues); it reads MSSGYSSAPSVSHTSSDT. Residues 1–37 are disordered; it reads MSSGYSSAPSVSHTSSDTDLNRIDSYDDGAEETTDEQ. Residues 138–476 enclose the TTL domain; sequence QARLTWCHNS…YVPPSFDKLS (339 aa). Residues Lys254, 260–261, 282–285, and 295–297 contribute to the ATP site; these read RG, QHYI, and KFD. Position 260 (Arg260) interacts with a protein. Residue Arg321 participates in L-glutamate binding. 342 to 343 is a binding site for ATP; sequence TN. Residues Tyr344, Ser345, and Lys362 each coordinate L-glutamate. Mg(2+) is bound by residues Asp422, Glu435, and Asn437. L-glutamate is bound at residue Lys453.

Belongs to the tubulin--tyrosine ligase family. Mg(2+) is required as a cofactor. As to expression, expressed in many sensory neurons in amphid.

The enzyme catalyses L-glutamyl-[protein] + L-glutamate + ATP = gamma-L-glutamyl-L-glutamyl-[protein] + ADP + phosphate + H(+). Its function is as follows. Monoglutamylase which modifies tubulin, adding a single glutamate on the gamma-carboxyl group of specific glutamate residues of target proteins. Involved in the side-chain initiation step of the polyglutamylation reaction but not in the elongation step. Preferentially modifies beta-tail tubulin over the alpha-tubulin. Involved in side-chain glutamylation of tubulin in sensory cilia. Together with ttll-5 and ttll-11, required for male mating. This chain is Tubulin polyglutamylase ttll-4, found in Caenorhabditis elegans.